The primary structure comprises 309 residues: Virulence regulon transcriptional activator VirB (309 aa).

Residues Lys-152–Ala-171 constitute a DNA-binding region (H-T-H motif).

The protein belongs to the ParB family.

Transcription activator for the invasion antigens IpaB, IpaC and IpaD. VirB is itself regulated by VirF. In Shigella flexneri, this protein is Virulence regulon transcriptional activator VirB (virB).